Reading from the N-terminus, the 813-residue chain is Calpain-7 (813 aa).

Methionine 1 is subject to N-acetylmethionine. Threonine 95 is modified (phosphothreonine). Residues 232–540 (RERFAYPMPF…YDVIYLSWNP (309 aa)) form the Calpain catalytic domain. Catalysis depends on residues cysteine 290, histidine 458, and asparagine 478. The domain III stretch occupies residues 541–701 (GLLKESTCIH…INGKWSGQSA (161 aa)). Positions 702–813 (GGCGNFQETH…VIPIKTTQLQ (112 aa)) are domain N.

The protein belongs to the peptidase C2 family.

The protein localises to the nucleus. Calcium-regulated non-lysosomal thiol-protease. The chain is Calpain-7 (CAPN7) from Sus scrofa (Pig).